The following is a 221-amino-acid chain: Epididymal secretory glutathione peroxidase (221 aa).

The signal sequence occupies residues 1–21 (MTAWLGASYVLPILLVSFVQT). The active site involves C73.

The protein belongs to the glutathione peroxidase family. As to expression, epididymis.

Its subcellular location is the secreted. It carries out the reaction 2 glutathione + H2O2 = glutathione disulfide + 2 H2O. Protects cells and enzymes from oxidative damage, by catalyzing the reduction of hydrogen peroxide, lipid peroxides and organic hydroperoxide, by glutathione. May constitute a glutathione peroxidase-like protective system against peroxide damage in sperm membrane lipids. The protein is Epididymal secretory glutathione peroxidase (GPX5) of Canis lupus familiaris (Dog).